The sequence spans 458 residues: O-acetyltransferase dmxR13 (458 aa).

Residues 211-231 form a disordered region; the sequence is ELARQISQPRPPPSSDGPPPP. Residues 219 to 231 show a composition bias toward pro residues; that stretch reads PRPPPSSDGPPPP.

Belongs to the trichothecene 3-O-acetyltransferase family.

Its pathway is secondary metabolite biosynthesis. O-acetyltransferase; part of the gene cluster that mediates the biosynthesis of the dimeric xanthones cryptosporioptides. The pathway begins with the synthesis of atrochrysone thioester by the polyketide synthase dmx-nrPKS. The atrochrysone carboxyl ACP thioesterase dmxR1 then breaks the thioester bond and releases the atrochrysone carboxylic acid from dmx-nrPKS. Atrochrysone carboxylic acid is decarboxylated by the decarboxylase dmxR15, and oxidized by the anthrone oxygenase dmxR16 to yield emodin. Emodin is then reduced to emodin hydroquinone by the oxidoreductase dmxR7. A-ring reduction by the short chain dehydrogenase dmxR18, dehydration by the scytalone dehydratase-like protein dmxR17 and probable spontaneous re-oxidation, results in overall deoxygenation to chrysophanol. Baeyer-Villiger oxidation by the Baeyer-Villiger monooxygenase (BVMO) dmxR6 then yields monodictylactone in equilibrium with monodictyphenone. In the case of the cryptosporioptides biosynthesis, monodictylactone is reduced at C-12 to an alcohol (by the short chain dehydrogenases dmxR12 or dmxR8) and hydroxylated at C-5 by dmxR9, yielding the electron-rich aromatic which could eliminate H(2)O to form the ortho-quinonemethide, followed by tautomerisation to paraquinone and complete the formal reduction to produce the 10-methylgroup. Conjugate addition of C-4a-OH to the resulting paraquinone by the monooxygenase dmxR10 then gives cyclohexadienone, which is then reduced at C-5 by the short chain dehydrogenase dmxR3 to give the dihydroxanthone. The 6,7-epoxide in the cryptosporioptides could be introduced by the cytochrome P450 monooxygenase dmxL3. The highly reducing PKS dmxL2 manufactures butyrate, which is further carboxylated by dmxL1 to form ethylmalonate. It is not yet clear whether the carboxylation occurs while the butyrate is attached to the ACP of dmxL2, but this unusual fungal metabolite could then be esterified to O-5 by the O-acetyltransferase dmxR13. Finally, dimerization performed by dmxR5 gives the observed dimers cryptosporioptides A, B and C as the final products of the pathway. The polypeptide is O-acetyltransferase dmxR13 (Cryptosporiopsis sp. (strain 8999)).